Reading from the N-terminus, the 272-residue chain is Streptomycin 3''-kinase (272 aa).

Catalysis depends on aspartate 190, which acts as the Proton acceptor.

It belongs to the aminoglycoside phosphotransferase family.

It carries out the reaction streptomycin + ATP = streptomycin 3''-phosphate + ADP + H(+). Its function is as follows. The aminoglycoside phosphotransferases achieve inactivation of their antibiotic substrates by phosphorylation. The polypeptide is Streptomycin 3''-kinase (aphE) (Streptomyces griseus).